The chain runs to 336 residues: MASPEERLLDELNNVIVSFLCDSGSLEVERCSGAHVFSRGSSQPLCTVKLRHGQIYHLEFVYKFLAFKLKNCNYPSSPVFVISNNGLATTLRCFLHEPSGLRSGQSGPCLGLSTDVDLPKNSIIMLGQDDFIKFKSPLVFPAELDLLKSMVVCRAYITEHRTTMQFLVFQAANAQKASRVMDMISDMSQQLSRSGQVEDTGARVTGGGGPRPGVTHSGCLGDSHVRGRGGWDLDNFSEAETEDEASYAPWRDKDSWSESEAAPWKKELVRHPIRRHRTRETRRMRGSHSRVEHVPPETRETVVGGAWRYSWRATPYLARVLAVTAVALLLMFLRWT.

The Perinuclear space portion of the chain corresponds to 1 to 315 (MASPEERLLD…AWRYSWRATP (315 aa)). Disordered stretches follow at residues 193 to 221 (RSGQ…GCLG) and 277 to 297 (RTRE…VPPE). Positions 277–288 (RTRETRRMRGSH) are enriched in basic residues. Residues 316–333 (YLARVLAVTAVALLLMFL) form a helical membrane-spanning segment. Topologically, residues 334–336 (RWT) are nuclear.

It belongs to the herpesviridae NEC2 protein family. As to quaternary structure, forms a heterodimeric viral nuclear egress complex (NEC) with NEC1. Interacts with host IKBKE; this interaction inhibits host IKBKE kinase activity and IRF3 nuclear translocation. In terms of processing, phosphorylated.

It localises to the host nucleus inner membrane. The protein resides in the host cytoplasm. The protein localises to the host perinuclear region. Plays an essential role in virion nuclear egress, the first step of virion release from infected cell. Within the host nucleus, NEC1 interacts with the newly formed capsid through the vertexes and directs it to the inner nuclear membrane by associating with NEC2. Induces the budding of the capsid at the inner nuclear membrane as well as its envelopment into the perinuclear space. There, the NEC1/NEC2 complex promotes the fusion of the enveloped capsid with the outer nuclear membrane and the subsequent release of the viral capsid into the cytoplasm where it will reach the secondary budding sites in the host Golgi or trans-Golgi network. Inhibits host IKBKE and IRF3, thereby impairing type I IFN signaling. The chain is Nuclear egress protein 2 from Homo sapiens (Human).